The chain runs to 343 residues: Ferredoxin--NADP reductase (343 aa).

Residues Asp-36, Gln-44, Tyr-49, Val-89, Phe-124, Asp-289, and Thr-330 each coordinate FAD.

The protein belongs to the ferredoxin--NADP reductase type 2 family. Homodimer. Requires FAD as cofactor.

It carries out the reaction 2 reduced [2Fe-2S]-[ferredoxin] + NADP(+) + H(+) = 2 oxidized [2Fe-2S]-[ferredoxin] + NADPH. The protein is Ferredoxin--NADP reductase of Mesorhizobium japonicum (strain LMG 29417 / CECT 9101 / MAFF 303099) (Mesorhizobium loti (strain MAFF 303099)).